The primary structure comprises 258 residues: Imidazole glycerol phosphate synthase subunit HisF (258 aa).

Residues D11 and D130 contribute to the active site.

Belongs to the HisA/HisF family. Heterodimer of HisH and HisF.

It is found in the cytoplasm. The catalysed reaction is 5-[(5-phospho-1-deoxy-D-ribulos-1-ylimino)methylamino]-1-(5-phospho-beta-D-ribosyl)imidazole-4-carboxamide + L-glutamine = D-erythro-1-(imidazol-4-yl)glycerol 3-phosphate + 5-amino-1-(5-phospho-beta-D-ribosyl)imidazole-4-carboxamide + L-glutamate + H(+). It functions in the pathway amino-acid biosynthesis; L-histidine biosynthesis; L-histidine from 5-phospho-alpha-D-ribose 1-diphosphate: step 5/9. Its function is as follows. IGPS catalyzes the conversion of PRFAR and glutamine to IGP, AICAR and glutamate. The HisF subunit catalyzes the cyclization activity that produces IGP and AICAR from PRFAR using the ammonia provided by the HisH subunit. In Photorhabdus laumondii subsp. laumondii (strain DSM 15139 / CIP 105565 / TT01) (Photorhabdus luminescens subsp. laumondii), this protein is Imidazole glycerol phosphate synthase subunit HisF.